We begin with the raw amino-acid sequence, 302 residues long: Beta-1,2-mannobiose phosphorylase (302 aa).

It belongs to the glycosyl hydrolase 130 family. In terms of assembly, monomer.

The enzyme catalyses beta-D-mannopyranosyl-(1-&gt;2)-D-mannopyranose + phosphate = alpha-D-mannose 1-phosphate + D-mannose. It functions in the pathway nucleotide-sugar biosynthesis; GDP-alpha-D-mannose biosynthesis. Functionally, probably involved in a salvage pathway for GDP-D-mannose biosynthesis. Catalyzes the reversible phosphorolysis of 1,2-beta-oligomannan. In phosphorolytic reactions, prefers beta-1,2-mannobiose (beta-1,2-Man2) as substrate. Produces alpha-D-mannose 1-phosphate, which is the precursor of GDP-D-mannose. The sequence is that of Beta-1,2-mannobiose phosphorylase from Thermoanaerobacter sp. (strain X514).